A 331-amino-acid polypeptide reads, in one-letter code: Anthranilate phosphoribosyltransferase (331 aa).

5-phospho-alpha-D-ribose 1-diphosphate is bound by residues Gly79, 82–83 (GD), Thr87, 89–92 (NIST), 107–115 (KHGNYGATS), and Ala119. Residue Gly79 participates in anthranilate binding. Ser91 is a Mg(2+) binding site. Asn110 contacts anthranilate. Arg165 is an anthranilate binding site. Mg(2+) contacts are provided by Asp223 and Glu224.

The protein belongs to the anthranilate phosphoribosyltransferase family. In terms of assembly, homodimer. It depends on Mg(2+) as a cofactor.

It catalyses the reaction N-(5-phospho-beta-D-ribosyl)anthranilate + diphosphate = 5-phospho-alpha-D-ribose 1-diphosphate + anthranilate. It participates in amino-acid biosynthesis; L-tryptophan biosynthesis; L-tryptophan from chorismate: step 2/5. Catalyzes the transfer of the phosphoribosyl group of 5-phosphorylribose-1-pyrophosphate (PRPP) to anthranilate to yield N-(5'-phosphoribosyl)-anthranilate (PRA). In Phocaeicola vulgatus (strain ATCC 8482 / DSM 1447 / JCM 5826 / CCUG 4940 / NBRC 14291 / NCTC 11154) (Bacteroides vulgatus), this protein is Anthranilate phosphoribosyltransferase.